The following is a 397-amino-acid chain: CCA-adding enzyme (397 aa).

Residues Gly8 and Arg11 each contribute to the ATP site. Positions 8 and 11 each coordinate CTP. Positions 21 and 23 each coordinate Mg(2+). Residues Arg91, Arg137, and Arg140 each contribute to the ATP site. Arg91, Arg137, and Arg140 together coordinate CTP. In terms of domain architecture, HD spans 213–324 (NLDAAIATLK…LALFNGCDAW (112 aa)).

This sequence belongs to the tRNA nucleotidyltransferase/poly(A) polymerase family. Bacterial CCA-adding enzyme type 2 subfamily. It depends on Mg(2+) as a cofactor.

The enzyme catalyses a tRNA precursor + 2 CTP + ATP = a tRNA with a 3' CCA end + 3 diphosphate. The catalysed reaction is a tRNA with a 3' CCA end + 2 CTP + ATP = a tRNA with a 3' CCACCA end + 3 diphosphate. Its function is as follows. Catalyzes the addition and repair of the essential 3'-terminal CCA sequence in tRNAs without using a nucleic acid template. Adds these three nucleotides in the order of C, C, and A to the tRNA nucleotide-73, using CTP and ATP as substrates and producing inorganic pyrophosphate. tRNA 3'-terminal CCA addition is required both for tRNA processing and repair. Also involved in tRNA surveillance by mediating tandem CCA addition to generate a CCACCA at the 3' terminus of unstable tRNAs. While stable tRNAs receive only 3'-terminal CCA, unstable tRNAs are marked with CCACCA and rapidly degraded. This is CCA-adding enzyme from Alteromonas mediterranea (strain DSM 17117 / CIP 110805 / LMG 28347 / Deep ecotype).